The chain runs to 470 residues: 3-isopropylmalate dehydratase large subunit (470 aa).

Positions 351, 411, and 414 each coordinate [4Fe-4S] cluster.

The protein belongs to the aconitase/IPM isomerase family. LeuC type 1 subfamily. In terms of assembly, heterodimer of LeuC and LeuD. [4Fe-4S] cluster serves as cofactor.

The enzyme catalyses (2R,3S)-3-isopropylmalate = (2S)-2-isopropylmalate. Its pathway is amino-acid biosynthesis; L-leucine biosynthesis; L-leucine from 3-methyl-2-oxobutanoate: step 2/4. Functionally, catalyzes the isomerization between 2-isopropylmalate and 3-isopropylmalate, via the formation of 2-isopropylmaleate. The polypeptide is 3-isopropylmalate dehydratase large subunit (Shewanella frigidimarina (strain NCIMB 400)).